We begin with the raw amino-acid sequence, 951 residues long: Bifunctional glutamine synthetase adenylyltransferase/adenylyl-removing enzyme (951 aa).

The segment at Met-1–Thr-440 is adenylyl removase. The segment at His-449–Ser-951 is adenylyl transferase.

This sequence belongs to the GlnE family. Mg(2+) serves as cofactor.

The catalysed reaction is [glutamine synthetase]-O(4)-(5'-adenylyl)-L-tyrosine + phosphate = [glutamine synthetase]-L-tyrosine + ADP. The enzyme catalyses [glutamine synthetase]-L-tyrosine + ATP = [glutamine synthetase]-O(4)-(5'-adenylyl)-L-tyrosine + diphosphate. Functionally, involved in the regulation of glutamine synthetase GlnA, a key enzyme in the process to assimilate ammonia. When cellular nitrogen levels are high, the C-terminal adenylyl transferase (AT) inactivates GlnA by covalent transfer of an adenylyl group from ATP to specific tyrosine residue of GlnA, thus reducing its activity. Conversely, when nitrogen levels are low, the N-terminal adenylyl removase (AR) activates GlnA by removing the adenylyl group by phosphorolysis, increasing its activity. The regulatory region of GlnE binds the signal transduction protein PII (GlnB) which indicates the nitrogen status of the cell. The polypeptide is Bifunctional glutamine synthetase adenylyltransferase/adenylyl-removing enzyme (Yersinia pseudotuberculosis serotype O:1b (strain IP 31758)).